A 110-amino-acid polypeptide reads, in one-letter code: MAEGGYEDRELEELRRKKLEELQKKAELERQAQIAAAQRRIALKKILTPAALARLDNIRVVRPELAEALEQQLIALASSGRVRVPIDEDTLKEILEAVYSQSKREYRFRL.

This sequence belongs to the PDCD5 family.

The sequence is that of DNA-binding protein Tneu_1679 from Pyrobaculum neutrophilum (strain DSM 2338 / JCM 9278 / NBRC 100436 / V24Sta) (Thermoproteus neutrophilus).